A 718-amino-acid chain; its full sequence is Nucleolar protein 11 (718 aa).

Lys346 is modified (N6-methyllysine).

In terms of assembly, interacts with UTP4. Interacts with FBL/fibrillarin in a transcription-dependent manner. May associate with the proposed t-UTP subcomplex of the SSU processome containing at least UTP4, WDR43, HEATR1, UTP15, WDR75.

It localises to the nucleus. It is found in the nucleolus. Functionally, ribosome biogenesis factor. May be required for both optimal rDNA transcription and small subunit (SSU) pre-rRNA processing at sites A', A0, 1 and 2b. The protein is Nucleolar protein 11 (NOL11) of Bos taurus (Bovine).